The sequence spans 239 residues: LexA repressor (239 aa).

Residues 26 to 46 (FDEMKEALDLASKSGIHRLIT) constitute a DNA-binding region (H-T-H motif). The tract at residues 90–110 (GSLGKTPPPPARPAPVATNDD) is disordered. Residues Ser-160 and Lys-198 each act as for autocatalytic cleavage activity in the active site.

The protein belongs to the peptidase S24 family. Homodimer.

The catalysed reaction is Hydrolysis of Ala-|-Gly bond in repressor LexA.. Its function is as follows. Represses a number of genes involved in the response to DNA damage (SOS response), including recA and lexA. In the presence of single-stranded DNA, RecA interacts with LexA causing an autocatalytic cleavage which disrupts the DNA-binding part of LexA, leading to derepression of the SOS regulon and eventually DNA repair. The chain is LexA repressor from Brucella anthropi (strain ATCC 49188 / DSM 6882 / CCUG 24695 / JCM 21032 / LMG 3331 / NBRC 15819 / NCTC 12168 / Alc 37) (Ochrobactrum anthropi).